Here is a 215-residue protein sequence, read N- to C-terminus: Thymidylate kinase (215 aa).

Residue 13–20 coordinates ATP; the sequence is GLEGAGKS.

Belongs to the thymidylate kinase family.

It carries out the reaction dTMP + ATP = dTDP + ADP. In terms of biological role, phosphorylation of dTMP to form dTDP in both de novo and salvage pathways of dTTP synthesis. The sequence is that of Thymidylate kinase from Shewanella frigidimarina (strain NCIMB 400).